Reading from the N-terminus, the 243-residue chain is Carboxy-S-adenosyl-L-methionine synthase (243 aa).

S-adenosyl-L-methionine contacts are provided by residues Tyr40, 65–67 (GSS), 90–91 (DN), 118–119 (DI), Asn133, and Arg200.

This sequence belongs to the class I-like SAM-binding methyltransferase superfamily. Cx-SAM synthase family. Homodimer.

The catalysed reaction is prephenate + S-adenosyl-L-methionine = carboxy-S-adenosyl-L-methionine + 3-phenylpyruvate + H2O. Its function is as follows. Catalyzes the conversion of S-adenosyl-L-methionine (SAM) to carboxy-S-adenosyl-L-methionine (Cx-SAM). The polypeptide is Carboxy-S-adenosyl-L-methionine synthase (Shewanella frigidimarina (strain NCIMB 400)).